Consider the following 333-residue polypeptide: HTH-type transcriptional repressor PurR (333 aa).

In terms of domain architecture, HTH lacI-type spans 2–56; sequence ATIKDVAKMAGVSTTTVSHVINKTRFVAKETEQQVLQAIKNLNYSPSAVARSLKV. Residues 4–23 constitute a DNA-binding region (H-T-H motif); the sequence is IKDVAKMAGVSTTTVSHVIN. The DNA-binding element occupies 48 to 56; the sequence is SAVARSLKV. Hypoxanthine contacts are provided by Y73, K189, T191, F220, and D274.

In terms of assembly, homodimer.

The protein operates within purine metabolism; purine nucleotide biosynthesis [regulation]. In terms of biological role, is the main repressor of the genes involved in the de novo synthesis of purine nucleotides, regulating purB, purC, purEK, purF, purHD, purL, purMN and guaBA expression. PurR is allosterically activated to bind its cognate DNA by binding the purine corepressors, hypoxanthine or guanine, thereby effecting transcription repression. The sequence is that of HTH-type transcriptional repressor PurR from Histophilus somni (strain 2336) (Haemophilus somnus).